Consider the following 62-residue polypeptide: uncharacterized protein (62 aa).

The tract at residues V38–M62 is disordered.

This is an uncharacterized protein from Schizosaccharomyces pombe (strain 972 / ATCC 24843) (Fission yeast).